A 608-amino-acid chain; its full sequence is NADH-quinone oxidoreductase subunit C/D (608 aa).

The NADH dehydrogenase I subunit C stretch occupies residues 1–199 (MSAASSLAPQ…EPFHLSTEKE (199 aa)). The NADH dehydrogenase I subunit D stretch occupies residues 223-608 (DFMFLNLGPN…IDFVMADVDR (386 aa)).

It in the N-terminal section; belongs to the complex I 30 kDa subunit family. In the C-terminal section; belongs to the complex I 49 kDa subunit family. NDH-1 is composed of 13 different subunits. Subunits NuoB, CD, E, F, and G constitute the peripheral sector of the complex.

Its subcellular location is the cell inner membrane. It catalyses the reaction a quinone + NADH + 5 H(+)(in) = a quinol + NAD(+) + 4 H(+)(out). Functionally, NDH-1 shuttles electrons from NADH, via FMN and iron-sulfur (Fe-S) centers, to quinones in the respiratory chain. The immediate electron acceptor for the enzyme in this species is believed to be ubiquinone. Couples the redox reaction to proton translocation (for every two electrons transferred, four hydrogen ions are translocated across the cytoplasmic membrane), and thus conserves the redox energy in a proton gradient. The polypeptide is NADH-quinone oxidoreductase subunit C/D (Nitrosospira multiformis (strain ATCC 25196 / NCIMB 11849 / C 71)).